The chain runs to 244 residues: 5-oxoprolinase subunit A (244 aa).

It belongs to the LamB/PxpA family. Forms a complex composed of PxpA, PxpB and PxpC.

The enzyme catalyses 5-oxo-L-proline + ATP + 2 H2O = L-glutamate + ADP + phosphate + H(+). Its function is as follows. Catalyzes the cleavage of 5-oxoproline to form L-glutamate coupled to the hydrolysis of ATP to ADP and inorganic phosphate. The polypeptide is 5-oxoprolinase subunit A (Escherichia coli (strain K12)).